A 750-amino-acid chain; its full sequence is Retron Eco8 OLD nuclease (750 aa).

An ATPase domain N-terminus region spans residues 1–173 (MTIESIRVKN…IDLYDWNPIW (173 aa)). 33-37 (NVGKS) is an ATP binding site. The segment at 174 to 260 (KLISNLNSFN…TQSDGTNSNK (87 aa)) is dimerization domain. The segment at 261–390 (FLETLLHLLI…FSDNEARLFF (130 aa)) is ATPase domain C-terminus. The segment at 391-704 (SEYIVFVEGA…SGWVTTFLNY (314 aa)) is toprim domain. A divalent metal cation contacts are provided by Glu398, Glu402, Asp450, Asp452, Ser623, and Glu641.

Belongs to the class 1 OLD nuclease family. As to quaternary structure, homodimer. Requires a divalent metal cation as cofactor.

Its function is as follows. Probable nuclease member of antiviral defense system retron Eco8, composed of an reverse transcriptase (RT), this nuclease and a non-coding RNA (ncRNA) encoded between them. Expression of retron Eco8 confers protection against bacteriophages T4, T6, T7 and SECphi4, SECphi6 and SECphi18. At multiplicity of infection (MOI) of 0.02 cultures slow growth when infected with SECphi4 but do not collapse, at MOI 2 cultures collapse. When the retron is cloned in another E.coli strain synthesizes msDNA (a branched RNA linked by a 2',5'-phosphodiester bond to a single-stranded DNA). The retron transcript serves as primer and template to the reaction, and codes for the RT. The protein is Retron Eco8 OLD nuclease of Escherichia coli.